A 115-amino-acid polypeptide reads, in one-letter code: Double-headed protease inhibitor, submandibular gland (115 aa).

2 Kazal-like domains span residues 6–66 (IGRE…ACDI) and 67–115 (ECTE…HGEC). 6 cysteine pairs are disulfide-bonded: Cys12–Cys46, Cys24–Cys43, Cys32–Cys64, Cys68–Cys97, Cys75–Cys94, and Cys83–Cys115.

The protein resides in the secreted. Functionally, this inhibitor is composed of two homologous actively inhibiting halves: one which inhibits trypsin, the other which inhibits elastase. The protein is Double-headed protease inhibitor, submandibular gland of Canis lupus familiaris (Dog).